We begin with the raw amino-acid sequence, 361 residues long: Transmembrane protein 116 (361 aa).

A run of 7 helical transmembrane segments spans residues tryptophan 29–alanine 49, phenylalanine 64–phenylalanine 84, threonine 103–leucine 123, leucine 147–glycine 167, cysteine 210–glycine 230, methionine 261–methionine 281, and valine 295–valine 315.

The protein resides in the membrane. This Danio rerio (Zebrafish) protein is Transmembrane protein 116 (tmem116).